Reading from the N-terminus, the 268-residue chain is MAKAGENSRDKSRWSLEGMTALVTGGSKGLGEAVVEELAMLGARVHTCARDETQLQERLREWQAKGFEVTTSVCDVSSREQREKLMETVSSVFQGKLNILVNNAGTGIIKPSTEYTAEDYSFLMATNLESAFHLSQIAHPLLKASGSGSIVFMSSVAGLVHTGASIYGASKGAMNQLGRSLACEWASDNIRVNSVCPWVITTPLTSFIFSDEKLRKAVEDKTPMGRVGEANEVSSLVAFLCFPAASYITGQTICVDGGASVNGFSFKP.

22–46 (LVTGGSKGLGEAVVEELAMLGARVH) is an NADP(+) binding site. Position 155 (serine 155) interacts with substrate. Residue tyrosine 167 is the Proton acceptor of the active site.

The protein belongs to the short-chain dehydrogenases/reductases (SDR) family. SDR65C subfamily.

Enantiospecific reductase active on cyclic monoterpenes and small flexible lipophilic carbonyls. No activity with tropinone, nitrogen-containing tropinone analogs, tropine or pseudotropine as substrate. This is Tropinone reductase homolog At2g29150 from Arabidopsis thaliana (Mouse-ear cress).